A 156-amino-acid polypeptide reads, in one-letter code: Transcription elongation factor GreA (156 aa).

The stretch at 45 to 66 (NAEYHSAKEKQSFIEGRIKELE) forms a coiled coil.

The protein belongs to the GreA/GreB family.

In terms of biological role, necessary for efficient RNA polymerase transcription elongation past template-encoded arresting sites. The arresting sites in DNA have the property of trapping a certain fraction of elongating RNA polymerases that pass through, resulting in locked ternary complexes. Cleavage of the nascent transcript by cleavage factors such as GreA or GreB allows the resumption of elongation from the new 3'terminus. GreA releases sequences of 2 to 3 nucleotides. The sequence is that of Transcription elongation factor GreA from Jannaschia sp. (strain CCS1).